The following is a 303-amino-acid chain: Monoglyceride lipase (303 aa).

T10 carries the phosphothreonine modification. Y58 is subject to 3'-nitrotyrosine. The active-site Nucleophile is the S122. Residues D239 and H269 each act as charge relay system in the active site.

Belongs to the AB hydrolase superfamily. Monoacylglycerol lipase family. Homodimer. As to expression, detected in adipose tissue, lung, liver, kidney, brain and heart.

It is found in the cytoplasm. It localises to the cytosol. The protein localises to the membrane. It catalyses the reaction Hydrolyzes glycerol monoesters of long-chain fatty acids.. The enzyme catalyses a 1-acylglycerol + H2O = glycerol + a fatty acid + H(+). The catalysed reaction is a 2-acylglycerol + H2O = glycerol + a fatty acid + H(+). It carries out the reaction 1-octanoylglycerol + H2O = octanoate + glycerol + H(+). It catalyses the reaction 2-(5Z,8Z,11Z,14Z-eicosatetraenoyl)-glycerol + H2O = glycerol + (5Z,8Z,11Z,14Z)-eicosatetraenoate + H(+). The enzyme catalyses 1-decanoylglycerol + H2O = decanoate + glycerol + H(+). The catalysed reaction is 1-dodecanoylglycerol + H2O = dodecanoate + glycerol + H(+). It carries out the reaction 1-tetradecanoylglycerol + H2O = tetradecanoate + glycerol + H(+). It catalyses the reaction 2-hexadecanoylglycerol + H2O = glycerol + hexadecanoate + H(+). The enzyme catalyses 1-(9Z-octadecenoyl)-glycerol + H2O = glycerol + (9Z)-octadecenoate + H(+). The catalysed reaction is 2-(9Z-octadecenoyl)-glycerol + H2O = glycerol + (9Z)-octadecenoate + H(+). It carries out the reaction 2-(9Z,12Z-octadecadienoyl)-glycerol + H2O = (9Z,12Z)-octadecadienoate + glycerol + H(+). It catalyses the reaction 1-(5Z,8Z,11Z,14Z-eicosatetraenoyl)-glycerol + H2O = glycerol + (5Z,8Z,11Z,14Z)-eicosatetraenoate + H(+). The enzyme catalyses 1-(9Z,12Z-octadecadienoyl)-glycerol + H2O = (9Z,12Z)-octadecadienoate + glycerol + H(+). The catalysed reaction is 1-hexadecanoylglycerol + H2O = glycerol + hexadecanoate + H(+). It carries out the reaction 1-octadecanoylglycerol + H2O = octadecanoate + glycerol + H(+). It catalyses the reaction prostaglandin E2 1-glyceryl ester + H2O = prostaglandin E2 + glycerol + H(+). The enzyme catalyses prostaglandin D2-1-glycerol ester + H2O = prostaglandin D2 + glycerol + H(+). The catalysed reaction is 2-glyceryl-15-deoxy-Delta(12,14)-prostaglandin J2 + H2O = 15-deoxy-Delta(12,14)-prostaglandin J2 + glycerol + H(+). It carries out the reaction prostaglandin F2alpha 1-glyceryl ester + H2O = prostaglandin F2alpha + glycerol + H(+). Its pathway is glycerolipid metabolism; triacylglycerol degradation. In terms of biological role, converts monoacylglycerides to free fatty acids and glycerol. Hydrolyzes the endocannabinoid 2-arachidonoylglycerol, and thereby contributes to the regulation of endocannabinoid signaling, nociperception and perception of pain. Regulates the levels of fatty acids that serve as signaling molecules and promote cancer cell migration, invasion and tumor growth. The polypeptide is Monoglyceride lipase (Homo sapiens (Human)).